We begin with the raw amino-acid sequence, 439 residues long: uncharacterized protein (439 aa).

Positions 273–439 constitute a VWFA domain; that stretch reads PIIILLDHSG…EARKIYKSIS (167 aa).

This is an uncharacterized protein from Methanocaldococcus jannaschii (strain ATCC 43067 / DSM 2661 / JAL-1 / JCM 10045 / NBRC 100440) (Methanococcus jannaschii).